The sequence spans 108 residues: ATPase inhibitor, mitochondrial (108 aa).

Residues 1–25 (MAATALAVRSRIGAWSVWAMQSRGF) constitute a mitochondrion transit peptide. Residues 25–48 (FSSDTPEGVRSGAGAVRDAGGAFG) are disordered. The N-terminal inhibitory region stretch occupies residues 26–52 (SSDTPEGVRSGAGAVRDAGGAFGKKEQ). Residues 69–108 (ALKKHHENEISHHVKEIERLQKEIERHKQSIKKLKNDDDD) are a coiled coil. An antiparallel alpha-helical coiled coil region region spans residues 74-106 (HENEISHHVKEIERLQKEIERHKQSIKKLKNDD). At K103 the chain carries N6-succinyllysine.

This sequence belongs to the ATPase inhibitor family. Homodimer; represents the active form and is present at a pH value below 6.5. Homotetramer; represents the inactive form and is present at a pH value above 7.0.

It is found in the mitochondrion. Functionally, endogenous F(1)F(o)-ATPase inhibitor limiting ATP depletion when the mitochondrial membrane potential falls below a threshold and the F(1)F(o)-ATP synthase starts hydrolyzing ATP to pump protons out of the mitochondrial matrix. Required to avoid the consumption of cellular ATP when the F(1)F(o)-ATP synthase enzyme acts as an ATP hydrolase. Indirectly acts as a regulator of heme synthesis in erythroid tissues: regulates heme synthesis by modulating the mitochondrial pH and redox potential, allowing FECH to efficiently catalyze the incorporation of iron into protoporphyrin IX to produce heme. This Sus scrofa (Pig) protein is ATPase inhibitor, mitochondrial.